We begin with the raw amino-acid sequence, 334 residues long: N-chimaerin (334 aa).

A compositionally biased stretch (polar residues) spans 1–10; the sequence is MPSKESWSGR. Residues 1–22 are disordered; sequence MPSKESWSGRKTNRATVHKSKQ. The residue at position 67 (threonine 67) is a Phosphothreonine. A Phorbol-ester/DAG-type zinc finger spans residues 80-130; it reads VHNFKVHTFRGPHWCEYCANFMWGLIAQGVKCADCGLNVHKQCSKMVPNDC. The Rho-GAP domain occupies 143 to 334; it reads CDLTTLVKAH…LLIKNEDILF (192 aa). Threonine 215 is modified (phosphothreonine).

As to quaternary structure, interacts with EPHA4; effector of EPHA4 in axon guidance linking EPHA4 activation to RAC1 regulation. In terms of processing, phosphorylated. Phosphorylation is EPHA4 kinase activity-dependent. In neurons in brain regions that are involved in learning and memory processes.

Functionally, GTPase-activating protein for p21-rac and a phorbol ester receptor. Involved in the assembly of neuronal locomotor circuits as a direct effector of EPHA4 in axon guidance. This chain is N-chimaerin (Chn1), found in Rattus norvegicus (Rat).